The sequence spans 278 residues: uncharacterized protein (278 aa).

The Cytoplasmic portion of the chain corresponds to 1 to 34 (MAKTIKVIRKKDPKKKNLSDPLAKQKLVWKIGHV). A helical transmembrane segment spans residues 35 to 55 (LTLVFGLLFSITYFYHVLIFF). Over 56–129 (KYRSWKWLFL…DLLSSENFHT (74 aa)) the chain is Extracellular. Residues 130–150 (LLIACLWFFGGGKSFYKILPY) form a helical membrane-spanning segment. Residues 151–180 (MILSYLHLTKMNYELNANKEEKIPLTPKDR) are Cytoplasmic-facing. A helical membrane pass occupies residues 181–201 (KMLHLLAYSELLVILALTLDT). The Extracellular portion of the chain corresponds to 202–205 (ILFK). The helical transmembrane segment at 206 to 222 (TGTSGFMLVIYVGIYWL) threads the bilayer. Topologically, residues 223 to 278 (RLNFSPYAQVAVLELLVKFEKYVPKKYRDKWQVIKNFIYMKMKEHEKRTEEVARYA) are cytoplasmic.

It localises to the cell membrane. This is an uncharacterized protein from Saccharomyces cerevisiae (strain ATCC 204508 / S288c) (Baker's yeast).